Consider the following 299-residue polypeptide: MFDENSNAAGTTPVASSLAATPNANLMSQVFNVKDSRWLQVEVCREFLRGQCARSDQECKFAHPPPNVDVQQGRVTACYDSIKGRCTRENPKCKYLHPPQHIKDQLLINGRNHLALKNLLSAQINQGGNQMINPMLALQQQAAAVNLLPNTQMYPQYYNGMMYQQVLPDPYAAAAQQLQTAALLGNVGGLLSAQSAAAALVANSSTQPPTPSPLLRLQRKRALEEDTSNGNDRTAAAHTQLLSLAAGAVPVKRPALDKNGAMLFSPAAPQTPQFNPYLLQTLQGYVPTVSCEYMQPPPF.

2 C3H1-type zinc fingers span residues 38 to 66 and 72 to 100; these read WLQV…HPPP and QGRV…HPPQ.

This sequence belongs to the muscleblind family.

It is found in the nucleus. In terms of biological role, binds to RNA with repeat sequences CUG and CCUG. This is Muscleblind-like protein from Caenorhabditis briggsae.